We begin with the raw amino-acid sequence, 492 residues long: Glutamyl-tRNA(Gln) amidotransferase subunit A (492 aa).

Active-site charge relay system residues include lysine 77 and serine 152. Serine 176 functions as the Acyl-ester intermediate in the catalytic mechanism.

Belongs to the amidase family. GatA subfamily. Heterotrimer of A, B and C subunits.

The catalysed reaction is L-glutamyl-tRNA(Gln) + L-glutamine + ATP + H2O = L-glutaminyl-tRNA(Gln) + L-glutamate + ADP + phosphate + H(+). In terms of biological role, allows the formation of correctly charged Gln-tRNA(Gln) through the transamidation of misacylated Glu-tRNA(Gln) in organisms which lack glutaminyl-tRNA synthetase. The reaction takes place in the presence of glutamine and ATP through an activated gamma-phospho-Glu-tRNA(Gln). The protein is Glutamyl-tRNA(Gln) amidotransferase subunit A (gatA) of Chlamydia pneumoniae (Chlamydophila pneumoniae).